Here is a 641-residue protein sequence, read N- to C-terminus: Soluble starch synthase 1, chloroplastic/amyloplastic (641 aa).

ADP-alpha-D-glucose is bound at residue K145.

Belongs to the glycosyltransferase 1 family. Bacterial/plant glycogen synthase subfamily. As to expression, high expression in leaves and very low in tubers.

The protein resides in the plastid. The protein localises to the chloroplast. It is found in the amyloplast. It catalyses the reaction [(1-&gt;4)-alpha-D-glucosyl](n) + ADP-alpha-D-glucose = [(1-&gt;4)-alpha-D-glucosyl](n+1) + ADP + H(+). Its pathway is glycan biosynthesis; starch biosynthesis. In terms of biological role, plays a minor role in starch synthesis in storage organs (tubers), but may contribute to the deposition of transient starch in chloroplasts of leaves. The protein is Soluble starch synthase 1, chloroplastic/amyloplastic of Solanum tuberosum (Potato).